Here is an 82-residue protein sequence, read N- to C-terminus: Delta-actitoxin-Aeq2c (82 aa).

An N-terminal signal peptide occupies residues 1–19 (MNRLMILVFAAVFLALASA). The propeptide occupies 20-26 (DEDVDIA). 3 disulfides stabilise this stretch: cysteine 32-cysteine 79, cysteine 34-cysteine 69, and cysteine 62-cysteine 80.

The protein belongs to the sea anemone sodium channel inhibitory toxin family. Type I subfamily.

The protein localises to the secreted. Its subcellular location is the nematocyst. In terms of biological role, binds specifically to voltage-gated sodium channels (Nav), thereby delaying their inactivation during signal transduction. Causes death to crabs. The protein is Delta-actitoxin-Aeq2c of Actinia equina (Beadlet anemone).